The primary structure comprises 84 residues: Small ribosomal subunit protein uS17 (84 aa).

The protein belongs to the universal ribosomal protein uS17 family. In terms of assembly, part of the 30S ribosomal subunit.

In terms of biological role, one of the primary rRNA binding proteins, it binds specifically to the 5'-end of 16S ribosomal RNA. The protein is Small ribosomal subunit protein uS17 of Moorella thermoacetica (strain ATCC 39073 / JCM 9320).